The primary structure comprises 552 residues: Arginine--tRNA ligase (552 aa).

The short motif at 129–139 (ANPTGPVTLAS) is the 'HIGH' region element.

The protein belongs to the class-I aminoacyl-tRNA synthetase family. As to quaternary structure, monomer.

Its subcellular location is the cytoplasm. The catalysed reaction is tRNA(Arg) + L-arginine + ATP = L-arginyl-tRNA(Arg) + AMP + diphosphate. The chain is Arginine--tRNA ligase from Frankia alni (strain DSM 45986 / CECT 9034 / ACN14a).